We begin with the raw amino-acid sequence, 530 residues long: Autoinducer-2 kinase (530 aa).

This sequence belongs to the FGGY kinase family.

The protein resides in the cytoplasm. It carries out the reaction (S)-4,5-dihydroxypentane-2,3-dione + ATP = (2S)-2-hydroxy-3,4-dioxopentyl phosphate + ADP + H(+). In terms of biological role, catalyzes the phosphorylation of autoinducer-2 (AI-2) to phospho-AI-2, which subsequently inactivates the transcriptional regulator LsrR and leads to the transcription of the lsr operon. Phosphorylates the ring-open form of (S)-4,5-dihydroxypentane-2,3-dione (DPD), which is the precursor to all AI-2 signaling molecules, at the C5 position. The sequence is that of Autoinducer-2 kinase from Photorhabdus laumondii subsp. laumondii (strain DSM 15139 / CIP 105565 / TT01) (Photorhabdus luminescens subsp. laumondii).